The sequence spans 256 residues: Thiazole synthase (256 aa).

K95 acts as the Schiff-base intermediate with DXP in catalysis. 1-deoxy-D-xylulose 5-phosphate contacts are provided by residues G156, 182-183 (AG), and 204-205 (NT).

Belongs to the ThiG family. As to quaternary structure, homotetramer. Forms heterodimers with either ThiH or ThiS.

It is found in the cytoplasm. It catalyses the reaction [ThiS sulfur-carrier protein]-C-terminal-Gly-aminoethanethioate + 2-iminoacetate + 1-deoxy-D-xylulose 5-phosphate = [ThiS sulfur-carrier protein]-C-terminal Gly-Gly + 2-[(2R,5Z)-2-carboxy-4-methylthiazol-5(2H)-ylidene]ethyl phosphate + 2 H2O + H(+). It participates in cofactor biosynthesis; thiamine diphosphate biosynthesis. In terms of biological role, catalyzes the rearrangement of 1-deoxy-D-xylulose 5-phosphate (DXP) to produce the thiazole phosphate moiety of thiamine. Sulfur is provided by the thiocarboxylate moiety of the carrier protein ThiS. In vitro, sulfur can be provided by H(2)S. The sequence is that of Thiazole synthase from Klebsiella pneumoniae subsp. pneumoniae (strain ATCC 700721 / MGH 78578).